The primary structure comprises 110 residues: UPF0122 protein gbs1018 (110 aa).

Belongs to the UPF0122 family.

Might take part in the signal recognition particle (SRP) pathway. This is inferred from the conservation of its genetic proximity to ftsY/ffh. May be a regulatory protein. This is UPF0122 protein gbs1018 from Streptococcus agalactiae serotype III (strain NEM316).